The chain runs to 63 residues: Bowman-Birk type proteinase inhibitor B-II (63 aa).

Cystine bridges form between C5/C62, C6/C23, C9/C57, C11/C21, C30/C37, C34/C49, and C39/C47.

This sequence belongs to the Bowman-Birk serine protease inhibitor family.

In Arachis hypogaea (Peanut), this protein is Bowman-Birk type proteinase inhibitor B-II.